Here is a 361-residue protein sequence, read N- to C-terminus: Mitochondrial import receptor subunit TOM40 homolog (361 aa).

The span at 1–10 (MGNVLAASSP) shows a compositional bias: low complexity. The interval 1 to 71 (MGNVLAASSP…AASAGGTADD (71 aa)) is disordered. Residues 11 to 36 (PAGPPPPPAPPLVGLPPPPPSPPGFT) show a composition bias toward pro residues. Residues 40 to 52 (LGGGLGAGAGTGR) show a composition bias toward gly residues. A compositionally biased stretch (low complexity) spans 59-71 (GTAAASAGGTADD).

Belongs to the Tom40 family. As to quaternary structure, forms part of the preprotein translocase complex of the outer mitochondrial membrane (TOM complex) which consists of at least 7 different proteins (TOMM5, TOMM6, TOMM7, TOMM20, TOMM22, TOMM40 and TOMM70). Interacts with mitochondrial targeting sequences. Interacts with TIMM29; linking the TIM22 complex to the TOM complex. Forms a complex with BCAP31 (via C-terminus) which mediates the translocation of components of the mitochondrial membrane respiratory chain NADH dehydrogenase (Complex I) from the cytosol to the mitochondria. Interacts (via N-terminus) with CYP1A1 (via mitochondrial targeting signal); this interaction is required for CYP1A1 translocation across the mitochondrial outer membrane.

Its subcellular location is the mitochondrion outer membrane. In terms of biological role, channel-forming protein essential for import of protein precursors into mitochondria. Plays a role in the assembly of the mitochondrial membrane respiratory chain NADH dehydrogenase (Complex I) by forming a complex with BCAP31 and mediating the translocation of Complex I components from the cytosol to the mitochondria. In Bos taurus (Bovine), this protein is Mitochondrial import receptor subunit TOM40 homolog.